The primary structure comprises 156 residues: Small ribosomal subunit protein uS7 (156 aa).

It belongs to the universal ribosomal protein uS7 family. As to quaternary structure, part of the 30S ribosomal subunit. Contacts proteins S9 and S11.

In terms of biological role, one of the primary rRNA binding proteins, it binds directly to 16S rRNA where it nucleates assembly of the head domain of the 30S subunit. Is located at the subunit interface close to the decoding center, probably blocks exit of the E-site tRNA. This is Small ribosomal subunit protein uS7 from Levilactobacillus brevis (strain ATCC 367 / BCRC 12310 / CIP 105137 / JCM 1170 / LMG 11437 / NCIMB 947 / NCTC 947) (Lactobacillus brevis).